A 357-amino-acid polypeptide reads, in one-letter code: Putative RING-H2 finger protein ATL37 (357 aa).

The first 31 residues, 1–31 (MTIFTRDFSHRILACVLLPLFLFQCLPYVTC), serve as a signal peptide directing secretion. The chain crosses the membrane as a helical span at residues 47–67 (SSIIGIVLLSLFLLLLVVYCL). The RING-type; atypical zinc finger occupies 120–162 (CAICLCEFEDEEPLRWMPPCSHTFHANCIDEWLSSRSTCPVCR). The disordered stretch occupies residues 172-210 (SFPHPSMDVETGNAQRGVQESPDERSLTGSSVTCNNNAN). The span at 198–210 (LTGSSVTCNNNAN) shows a compositional bias: polar residues. At serine 273 the chain carries Phosphoserine. 2 disordered regions span residues 281-304 (RSSR…QGRQ) and 327-357 (LDRD…PEKN). Residues 283-304 (SRQGYRSGSVGNERTGFSQGRQ) show a composition bias toward polar residues. Residues 340–357 (NDKDFGERSFQRLMPEKN) are compositionally biased toward basic and acidic residues.

It belongs to the RING-type zinc finger family. ATL subfamily.

It localises to the membrane. It catalyses the reaction S-ubiquitinyl-[E2 ubiquitin-conjugating enzyme]-L-cysteine + [acceptor protein]-L-lysine = [E2 ubiquitin-conjugating enzyme]-L-cysteine + N(6)-ubiquitinyl-[acceptor protein]-L-lysine.. The protein operates within protein modification; protein ubiquitination. The protein is Putative RING-H2 finger protein ATL37 (ATL37) of Arabidopsis thaliana (Mouse-ear cress).